The chain runs to 227 residues: Cytochrome c oxidase subunit 2 (227 aa).

Residues M1–S14 lie on the Mitochondrial intermembrane side of the membrane. Residues P15–M45 traverse the membrane as a helical segment. Over L46–Q59 the chain is Mitochondrial matrix. A helical transmembrane segment spans residues E60 to M87. Residues D88–T227 are Mitochondrial intermembrane-facing. Residues H161, C196, E198, C200, H204, and M207 each contribute to the Cu cation site. A Mg(2+)-binding site is contributed by E198.

The protein belongs to the cytochrome c oxidase subunit 2 family. As to quaternary structure, component of the cytochrome c oxidase (complex IV, CIV), a multisubunit enzyme composed of 14 subunits. The complex is composed of a catalytic core of 3 subunits MT-CO1, MT-CO2 and MT-CO3, encoded in the mitochondrial DNA, and 11 supernumerary subunits COX4I, COX5A, COX5B, COX6A, COX6B, COX6C, COX7A, COX7B, COX7C, COX8 and NDUFA4, which are encoded in the nuclear genome. The complex exists as a monomer or a dimer and forms supercomplexes (SCs) in the inner mitochondrial membrane with NADH-ubiquinone oxidoreductase (complex I, CI) and ubiquinol-cytochrome c oxidoreductase (cytochrome b-c1 complex, complex III, CIII), resulting in different assemblies (supercomplex SCI(1)III(2)IV(1) and megacomplex MCI(2)III(2)IV(2)). Found in a complex with TMEM177, COA6, COX18, COX20, SCO1 and SCO2. Interacts with TMEM177 in a COX20-dependent manner. Interacts with COX20. Interacts with COX16. The cofactor is Cu cation.

Its subcellular location is the mitochondrion inner membrane. The catalysed reaction is 4 Fe(II)-[cytochrome c] + O2 + 8 H(+)(in) = 4 Fe(III)-[cytochrome c] + 2 H2O + 4 H(+)(out). In terms of biological role, component of the cytochrome c oxidase, the last enzyme in the mitochondrial electron transport chain which drives oxidative phosphorylation. The respiratory chain contains 3 multisubunit complexes succinate dehydrogenase (complex II, CII), ubiquinol-cytochrome c oxidoreductase (cytochrome b-c1 complex, complex III, CIII) and cytochrome c oxidase (complex IV, CIV), that cooperate to transfer electrons derived from NADH and succinate to molecular oxygen, creating an electrochemical gradient over the inner membrane that drives transmembrane transport and the ATP synthase. Cytochrome c oxidase is the component of the respiratory chain that catalyzes the reduction of oxygen to water. Electrons originating from reduced cytochrome c in the intermembrane space (IMS) are transferred via the dinuclear copper A center (CU(A)) of subunit 2 and heme A of subunit 1 to the active site in subunit 1, a binuclear center (BNC) formed by heme A3 and copper B (CU(B)). The BNC reduces molecular oxygen to 2 water molecules using 4 electrons from cytochrome c in the IMS and 4 protons from the mitochondrial matrix. This is Cytochrome c oxidase subunit 2 (MT-CO2) from Taterillus emini (Emin's gerbil).